The following is a 105-amino-acid chain: Protein METHYLENE BLUE SENSITIVITY 1 (105 aa).

The disordered stretch occupies residues 26–46; it reads RGGGKAGIADRTGKEKGGHAK. Basic and acidic residues predominate over residues 36–46; that stretch reads RTGKEKGGHAK.

In terms of tissue distribution, mainly expressed in the epidermis.

Its subcellular location is the nucleus. It localises to the cytoplasm. The protein localises to the stress granule. Functionally, required for acclimation to reactive oxygen species (ROS) responses downstream of beta-cyclocitral (beta-cc) or mediated by dihydroactinidiolide, including singlet oxygen 1O(2) detoxification reactions, especially upon light-mediated photooxidative stress, and leading to programmed cell death. Prevents leaf senescence. Involved in cold acclimation. The polypeptide is Protein METHYLENE BLUE SENSITIVITY 1 (Arabidopsis thaliana (Mouse-ear cress)).